A 161-amino-acid polypeptide reads, in one-letter code: 6,7-dimethyl-8-ribityllumazine synthase (161 aa).

Residues F23, 61–63, and 85–87 each bind 5-amino-6-(D-ribitylamino)uracil; these read SFE and AVI. Position 90–91 (90–91) interacts with (2S)-2-hydroxy-3-oxobutyl phosphate; that stretch reads DT. H93 acts as the Proton donor in catalysis. A 5-amino-6-(D-ribitylamino)uracil-binding site is contributed by F118. Position 132 (R132) interacts with (2S)-2-hydroxy-3-oxobutyl phosphate.

This sequence belongs to the DMRL synthase family.

It carries out the reaction (2S)-2-hydroxy-3-oxobutyl phosphate + 5-amino-6-(D-ribitylamino)uracil = 6,7-dimethyl-8-(1-D-ribityl)lumazine + phosphate + 2 H2O + H(+). It functions in the pathway cofactor biosynthesis; riboflavin biosynthesis; riboflavin from 2-hydroxy-3-oxobutyl phosphate and 5-amino-6-(D-ribitylamino)uracil: step 1/2. Functionally, catalyzes the formation of 6,7-dimethyl-8-ribityllumazine by condensation of 5-amino-6-(D-ribitylamino)uracil with 3,4-dihydroxy-2-butanone 4-phosphate. This is the penultimate step in the biosynthesis of riboflavin. The protein is 6,7-dimethyl-8-ribityllumazine synthase of Synechococcus sp. (strain WH7803).